The chain runs to 340 residues: Glycerol-3-phosphate dehydrogenase [NAD(P)+] (340 aa).

NADPH contacts are provided by S23, W24, R43, K44, and K113. Sn-glycerol 3-phosphate contacts are provided by K113, G141, and T143. A145 is an NADPH binding site. Sn-glycerol 3-phosphate is bound by residues K196, D249, S259, R260, and N261. K196 functions as the Proton acceptor in the catalytic mechanism. NADPH is bound at residue R260. E286 is a binding site for NADPH.

It belongs to the NAD-dependent glycerol-3-phosphate dehydrogenase family.

It localises to the cytoplasm. It carries out the reaction sn-glycerol 3-phosphate + NAD(+) = dihydroxyacetone phosphate + NADH + H(+). The enzyme catalyses sn-glycerol 3-phosphate + NADP(+) = dihydroxyacetone phosphate + NADPH + H(+). It participates in membrane lipid metabolism; glycerophospholipid metabolism. Catalyzes the reduction of the glycolytic intermediate dihydroxyacetone phosphate (DHAP) to sn-glycerol 3-phosphate (G3P), the key precursor for phospholipid synthesis. The protein is Glycerol-3-phosphate dehydrogenase [NAD(P)+] of Zymomonas mobilis subsp. mobilis (strain ATCC 31821 / ZM4 / CP4).